The sequence spans 173 residues: Translation initiation factor IF-3 (173 aa).

It belongs to the IF-3 family. Monomer.

It localises to the cytoplasm. Functionally, IF-3 binds to the 30S ribosomal subunit and shifts the equilibrium between 70S ribosomes and their 50S and 30S subunits in favor of the free subunits, thus enhancing the availability of 30S subunits on which protein synthesis initiation begins. The protein is Translation initiation factor IF-3 of Caulobacter vibrioides (strain ATCC 19089 / CIP 103742 / CB 15) (Caulobacter crescentus).